Consider the following 869-residue polypeptide: 1-phosphatidylinositol 4,5-bisphosphate phosphodiesterase 1 (869 aa).

In terms of domain architecture, EF-hand spans 269–304 (VSTGQLLEFFQLADINHNGLLNYFEFEKFIKILKNR). Residues Asp282, Asn284, Asn286, and Glu293 each contribute to the Ca(2+) site. The PI-PLC X-box domain maps to 382 to 520 (YSKPLNHYFI…LKHKILLKSK (139 aa)). Residues His395 and His439 contribute to the active site. Substrate contacts are provided by Lys518 and Lys520. The segment at 546-571 (ANEQELRMKDDSTNSSSATNSSSMQR) is disordered. Low complexity predominate over residues 558-568 (TNSSSATNSSS). In terms of domain architecture, PI-PLC Y-box spans 590–709 (ISGIHGIKFR…SGYVLKPKKL (120 aa)). 2 residues coordinate substrate: Ser614 and Arg643. In terms of domain architecture, C2 spans 713–862 (VTKAKMIPLI…EGEQYIFCTL (150 aa)).

In terms of assembly, interacts with SGD1. It depends on Ca(2+) as a cofactor.

It catalyses the reaction a 1,2-diacyl-sn-glycero-3-phospho-(1D-myo-inositol-4,5-bisphosphate) + H2O = 1D-myo-inositol 1,4,5-trisphosphate + a 1,2-diacyl-sn-glycerol + H(+). Functionally, the production of the second messenger molecules diacylglycerol (DAG) and inositol 1,4,5-trisphosphate (IP3) is mediated by activated phosphatidylinositol-specific phospholipase C enzymes. Required for cell growth, osmoresistance and expression of GPD1. The protein is 1-phosphatidylinositol 4,5-bisphosphate phosphodiesterase 1 (PLC1) of Saccharomyces cerevisiae (strain ATCC 204508 / S288c) (Baker's yeast).